The following is a 309-amino-acid chain: Isoflavone reductase homolog IRL (309 aa).

NADP(+) is bound by residues 12–18, R37, and K46; that span reads GGTGYLG. K134 serves as the catalytic Proton acceptor. R138 is an NADP(+) binding site.

Belongs to the NmrA-type oxidoreductase family. Isoflavone reductase subfamily. Monomer.

It localises to the cytoplasm. It participates in alkaloid biosynthesis. Its function is as follows. Reductase that may be involved in a late step of alkaloid biosynthesis. The chain is Isoflavone reductase homolog IRL from Zea mays (Maize).